The following is a 567-amino-acid chain: Vacuolar fusion protein MON1 homolog (567 aa).

Disordered stretches follow at residues 1–52 (MDMD…DDEG) and 65–129 (TSAS…DDTS). A compositionally biased stretch (pro residues) spans 7–19 (TNNPSPPGPPDSP). Acidic residues predominate over residues 43-52 (DDYDDDDDEG).

This sequence belongs to the MON1/SAND family. As to quaternary structure, interacts with CCZ1A, CCZ1B and RABF2B.

It localises to the endosome. The protein resides in the prevacuolar compartment. Plays an important role in membrane trafficking through the secretory apparatus. In complex with CCZ1, acts as a guanine exchange factor (GEF) for Rab7 protein family. Promotes the exchange of GDP to GTP, converting it from an inactive GDP-bound form into an active GTP-bound form. The active form is involved in protein trafficking from prevacuolar compartments (PVCs) to vacuoles. May serve as a linker between Rab5 and Rab7 protein families in PVCs and mediate PVC maturation. The polypeptide is Vacuolar fusion protein MON1 homolog (Oryza sativa subsp. japonica (Rice)).